The sequence spans 662 residues: MIVSPCCRIIRTCCVSNRGTFHSRLAALYPSYIKIPNNHARIFVTKSRKINRPSSSFIIDTKEARQRNSDSSTVSSDLDEILKDQTPSAQLRLVDAYRRGFQSSTDSGKSSNKMQMWRTIIIKTILFGVVSCFTIVFLKKTLVGTFPKFLDQNIGSFAENTDVSFSDVQGCDEVKKELVDVVEFLRNPEKFNQIGAKLPKGVLLVGPPGVGKTLLAKAVSGEAQVPFLYASGSSFDEVLVGLGASRIRQLFTTAKQNSPCLVFIDEIDSVGGNRTFSPHHPFANQTINQLLAEMDGFQSKEGIIVLGATNQAEVLDKALLRPGRFDVQIHVSPPTYEGRIALLNLYLKKVKTGSNIDIEKLAHGTVGYTGADIQNLVNQAAIAAALRNDPFVEMHHLWDARDRLIMGPAKRRPLDDQTNRVSAFHEAGHALVALLTADSIPLHKVTIIPRGEAGGLTSFLQEKDISFMTRAQLLAQLDVLMGGRVGEELVFGADKVTNGAADDFRKATILAQNMVKRFGFSSKIGPRVIPDTQDEQLGEATRDLIDKEVDQLLNDSLTRVRTLLSSQSKQHKLLAEALLHFETLTKDEVLAVLAGKMKPPKTQSVTSKSTTLLPQLGPSTSTEIPRMIVSLIIVHVVDFISFFCPFKDTLHTYTHTHKLLFS.

206-213 is a binding site for ATP; that stretch reads GPPGVGKT. Histidine 425 contributes to the Zn(2+) binding site. Residue glutamate 426 is part of the active site. Zn(2+) is bound by residues histidine 429 and aspartate 503.

The protein in the N-terminal section; belongs to the AAA ATPase family. In the C-terminal section; belongs to the peptidase M41 family. Requires Zn(2+) as cofactor.

Functionally, putative ATP-dependent protease. This Schistosoma mansoni (Blood fluke) protein is ATP-dependent zinc metalloprotease YME1 homolog.